The sequence spans 292 residues: 33 kDa chaperonin (292 aa).

2 disulfide bridges follow: cysteine 229-cysteine 231 and cysteine 262-cysteine 265.

Belongs to the HSP33 family. Post-translationally, under oxidizing conditions two disulfide bonds are formed involving the reactive cysteines. Under reducing conditions zinc is bound to the reactive cysteines and the protein is inactive.

The protein localises to the cytoplasm. Its function is as follows. Redox regulated molecular chaperone. Protects both thermally unfolding and oxidatively damaged proteins from irreversible aggregation. Plays an important role in the bacterial defense system toward oxidative stress. This chain is 33 kDa chaperonin, found in Photobacterium profundum (strain SS9).